Here is a 906-residue protein sequence, read N- to C-terminus: Protein translocase subunit SecA (906 aa).

Residues Gln-89, 107 to 111, and Asp-502 contribute to the ATP site; that span reads GEGKT. Residues 868-887 form a disordered region; the sequence is VPPAQRDPADPRTWGKVSRN. Zn(2+) is bound by residues Cys-890, Cys-892, Cys-901, and His-902.

Belongs to the SecA family. In terms of assembly, monomer and homodimer. Part of the essential Sec protein translocation apparatus which comprises SecA, SecYEG and auxiliary proteins SecDF-YajC and YidC. The cofactor is Zn(2+).

It localises to the cell inner membrane. It is found in the cytoplasm. It catalyses the reaction ATP + H2O + cellular proteinSide 1 = ADP + phosphate + cellular proteinSide 2.. In terms of biological role, part of the Sec protein translocase complex. Interacts with the SecYEG preprotein conducting channel. Has a central role in coupling the hydrolysis of ATP to the transfer of proteins into and across the cell membrane, serving both as a receptor for the preprotein-SecB complex and as an ATP-driven molecular motor driving the stepwise translocation of polypeptide chains across the membrane. This chain is Protein translocase subunit SecA, found in Brucella melitensis biotype 1 (strain ATCC 23456 / CCUG 17765 / NCTC 10094 / 16M).